A 380-amino-acid polypeptide reads, in one-letter code: MSTTVGQVIRCKAAVAWEAGKPLVMEEVDVAPPQKMEVRLKILYTSLCHTDVYFWEAKGQNPVFPRILGHEAAGIVESVGEGVTDLAPGDHVLPVFTGECKDCAHCKSEESNMCSLLRINTDRGVMLNDGKSRFSINGNPIYHFVGTSTFSEYTVVHVGCVAKINPLAPLDKVCVLSCGISTGLGASLNVAKPTKGSSVAIFGLGAVGLAAAEGARIAGASRIIGVDLNASRFEQAKKFGVTEFVNPKDYSKPVQEVIAEMTDGGVDRSVECTGHIDAMISAFECVHDGWGVAVLVGVPHKEAVFKTHPLNFLNERTLKGTFFGNYKPRSDIPCVVEKYMNKELELEKFITHTLPFAEINKAFDLMLKGEGLRCIITMAD.

Cys-48, Thr-50, His-70, Cys-100, Cys-103, Cys-106, Cys-114, and Cys-178 together coordinate Zn(2+). The an alcohol site is built by Thr-50 and His-70. Residue Thr-50 coordinates NAD(+). NAD(+)-binding positions include 203 to 208, Asp-227, Arg-232, Thr-273, Val-296, 296 to 298, Phe-323, and Arg-373; these read GLGAVG and VGV.

It belongs to the zinc-containing alcohol dehydrogenase family. Homodimer. Homotetramer. Zn(2+) is required as a cofactor.

It is found in the cytoplasm. It carries out the reaction a primary alcohol + NAD(+) = an aldehyde + NADH + H(+). It catalyses the reaction a secondary alcohol + NAD(+) = a ketone + NADH + H(+). The protein is Alcohol dehydrogenase 2 (ADH2) of Solanum lycopersicum (Tomato).